Reading from the N-terminus, the 87-residue chain is U9-ctenitoxin-Pn1a (87 aa).

The first 22 residues, 1 to 22 (MWLKTQLFVLAIAVIALLEVHA), serve as a signal peptide directing secretion. Positions 23 to 37 (EPESNDNNELVVEEA) are excised as a propeptide. Intrachain disulfides connect Cys40-Cys54, Cys47-Cys64, Cys53-Cys73, and Cys66-Cys71. Residues 75–87 (KSLREMAAAAFGR) constitute a propeptide that is removed on maturation.

It belongs to the neurotoxin 02 (plectoxin) family. 01 (Tx3) subfamily. As to expression, expressed by the venom gland.

The protein resides in the secreted. Functionally, antagonist of L-type calcium channels (Cav1/CACNA1). The sequence is that of U9-ctenitoxin-Pn1a from Phoneutria nigriventer (Brazilian armed spider).